A 122-amino-acid chain; its full sequence is uncharacterized protein (122 aa).

Positions 79–90 (NERVTSRVTNSR) are enriched in polar residues. A disordered region spans residues 79–122 (NERVTSRVTNSRTESESNGNGNATGNTSSNANSNGNANGIYIRK). A compositionally biased stretch (low complexity) spans 94–122 (ESNGNGNATGNTSSNANSNGNANGIYIRK).

This is an uncharacterized protein from Leptolyngbya boryana (Plectonema boryanum).